The chain runs to 386 residues: Protein-glutamate methylesterase/protein-glutamine glutaminase (386 aa).

One can recognise a Response regulatory domain in the interval 4 to 121 (KVLVVDDSAF…ARNRDEAVKT (118 aa)). Asp-55 carries the 4-aspartylphosphate modification. The disordered stretch occupies residues 133–161 (PVSRTSARASTPPPVAKQPERSSEPTTAL). Positions 190 to 384 (INRAYQLLAI…KAIMKEVGYS (195 aa)) constitute a CheB-type methylesterase domain. Catalysis depends on residues Ser-202, His-229, and Asp-326.

It belongs to the CheB family. Phosphorylated by CheA. Phosphorylation of the N-terminal regulatory domain activates the methylesterase activity.

It localises to the cytoplasm. The enzyme catalyses [protein]-L-glutamate 5-O-methyl ester + H2O = L-glutamyl-[protein] + methanol + H(+). It carries out the reaction L-glutaminyl-[protein] + H2O = L-glutamyl-[protein] + NH4(+). Its function is as follows. Involved in chemotaxis. Part of a chemotaxis signal transduction system that modulates chemotaxis in response to various stimuli. Catalyzes the demethylation of specific methylglutamate residues introduced into the chemoreceptors (methyl-accepting chemotaxis proteins or MCP) by CheR. Also mediates the irreversible deamidation of specific glutamine residues to glutamic acid. The protein is Protein-glutamate methylesterase/protein-glutamine glutaminase of Idiomarina loihiensis (strain ATCC BAA-735 / DSM 15497 / L2-TR).